The sequence spans 145 residues: Basic phospholipase A2 cL038 (145 aa).

An N-terminal signal peptide occupies residues 1–21 (MYPAHLLVLLAVCVSLLGASA). Positions 22-27 (IPPLPL) are excised as a propeptide. 7 disulfides stabilise this stretch: C38–C98, C54–C144, C56–C72, C71–C125, C78–C118, C87–C111, and C105–C116. Ca(2+)-binding residues include Y55, G57, and G59. Residue H75 is part of the active site. Position 76 (D76) interacts with Ca(2+). The active site involves D119.

The protein belongs to the phospholipase A2 family. Group I subfamily. D49 sub-subfamily. It depends on Ca(2+) as a cofactor. As to expression, expressed by the venom gland.

It localises to the secreted. It catalyses the reaction a 1,2-diacyl-sn-glycero-3-phosphocholine + H2O = a 1-acyl-sn-glycero-3-phosphocholine + a fatty acid + H(+). PLA2 catalyzes the calcium-dependent hydrolysis of the 2-acyl groups in 3-sn-phosphoglycerides. The sequence is that of Basic phospholipase A2 cL038 from Laticauda semifasciata (Black-banded sea krait).